The primary structure comprises 802 residues: Protein enabled homolog (802 aa).

The WH1 domain maps to 1 to 111 (MSEQSICQAR…SAMMHALEVL (111 aa)). Polar residues predominate over residues 143 to 155 (NSQLPAQVQNGPS). The disordered stretch occupies residues 143-166 (NSQLPAQVQNGPSQEELEIQRRQL). At S144 the chain carries Phosphoserine. The stretch at 154-258 (PSQEELEIQR…ERERRMSNAA (105 aa)) forms a coiled coil. 7 consecutive repeat copies span residues 175–179 (LERER), 180–184 (MERER), 185–189 (LERER), 190–194 (LERER), 195–199 (LERER), 200–204 (LEQEQ), and 205–209 (LERQR). The interval 175–209 (LERERMERERLERERLERERLERERLEQEQLERQR) is 7 X 5 AA tandem repeats of [LM]-E-[QR]-[EQ]-[QR]. Over residues 245-254 (QVEWERERRM) the composition is skewed to basic and acidic residues. 2 disordered regions span residues 245 to 287 (QVEW…PSYA) and 341 to 622 (ATVP…RPLT). A Phosphoserine; by PKA modification is found at S255. The span at 255-278 (SNAAPSSDSSLSSAPLPEYSSCQP) shows a compositional bias: low complexity. Residues 348–361 (NKNSRPSSPVNTPS) show a composition bias toward polar residues. S383 carries the phosphoserine modification. Low complexity predominate over residues 386–410 (IMISSPPGKATGPRPVLPVCVSSPV). A compositionally biased stretch (pro residues) spans 431-464 (VSPPPTSGPAAPPPPPPPPPPPPPPPLPPPPLPP). Residues 485 to 505 (STPSSKPSVLPSPSAGAPASA) are compositionally biased toward low complexity. Polar residues predominate over residues 525–535 (AASQPAESPTP). The segment covering 542–553 (PPAPPPPPPLPS) has biased composition (pro residues). Residue Y557 is modified to Phosphotyrosine. The span at 561-605 (LPPPPGPPPPPPLPSTGPPPPPPPPPPLPNQAPPPPPPPPAPPLP) shows a compositional bias: pro residues. Positions 623–643 (GLAAAIAGAKLRKVSRVEDGS) are EVH2 block A. The tract at residues 623-799 (GLAAAIAGAK…DAIRQELSKS (177 aa)) is EVH2. A KLKR motif is present at residues 632 to 635 (KLRK). Disordered stretches follow at residues 639–675 (VEDG…GGSG) and 691–764 (AEKG…TEGL). The span at 664–675 (RGNGPLPLGGSG) shows a compositional bias: gly residues. The segment at 674–691 (SGLMEEMSALLARRRRIA) is EVH2 block B. A compositionally biased stretch (polar residues) spans 731–760 (RTNTMNGSKSPVISRPKSTPSSQPSANGVQ). Residues S738 and S740 each carry the phosphoserine modification. Residues 765-799 (DYDRLKQDILDEMRKELAKLKEELIDAIRQELSKS) are EVH2 block C. A coiled-coil region spans residues 767–797 (DRLKQDILDEMRKELAKLKEELIDAIRQELS).

The protein belongs to the Ena/VASP family. Homotetramer. Interacts with APBB1IP, APBB1, PFN1 and ROBO4. Isoforms, containing the polyproline-rich regions with PPLP motifs, bind the WW domain of APBB1IP. Isoforms, containing the PPSY motif, bind, in vitro, to the WW2 and WW3 domains of NEDD4 and to the WW1 domain of YAP1. Binds the SH3 domain of BAIAP2-alpha but only after the autoinhibitory region of BAIAP2-alpha has been blocked by interaction with CDC42. Interacts, via the EVH1/WH1 domain, with the Pro-rich domains from VCL, ZYX and Listeria monocytogenes actA and with TES (via LIM domain). The TES LIM domain and the Pro-rich domains from VCL or ZYX compete for the same binding site. Interaction with ZYX is important for targeting ENAH to focal adhesions and enhances production of actin-rich structures at the apical surface of cells. Binds GPHN. Heterotrimer with TES and ACTL7A. Interacts with FAT1 (via EVH1 domains). Interacts, through the Pro-rich region, with the C-terminal SH3 domain of DNMPB. Interacts with PRPF40A. NTN1-induced PKA phosphorylation on Ser-255 directly parallels the formation of filopodial protrusions. As to expression, expressed in heart and testis, lower levels in lung, skeletal muscle, kidney, pancreas and brain. Isoform 5 is expressed exclusively in the brain. Isoform 2 is expressed predominantly in brain, testis, ovary and fat. In the brain, isoforms 2 and 5 are expressed at highest levels in the hippocampus, cortex and midbrain, and at lowest levels in the striatum and cerebellum. Isoform 6 is expressed in brain and spleen.

The protein resides in the cytoplasm. It is found in the cytoskeleton. Its subcellular location is the cell projection. The protein localises to the lamellipodium. It localises to the filopodium. The protein resides in the synapse. It is found in the cell junction. Its subcellular location is the focal adhesion. Ena/VASP proteins are actin-associated proteins involved in a range of processes dependent on cytoskeleton remodeling and cell polarity such as axon guidance and lamellipodial and filopodial dynamics in migrating cells. ENAH induces the formation of F-actin rich outgrowths in fibroblasts. Acts synergistically with BAIAP2-alpha and downstream of NTN1 to promote filipodia formation. The sequence is that of Protein enabled homolog (Enah) from Mus musculus (Mouse).